Consider the following 466-residue polypeptide: 3-isopropylmalate dehydratase large subunit (466 aa).

[4Fe-4S] cluster is bound by residues C347, C407, and C410.

It belongs to the aconitase/IPM isomerase family. LeuC type 1 subfamily. As to quaternary structure, heterodimer of LeuC and LeuD. It depends on [4Fe-4S] cluster as a cofactor.

It carries out the reaction (2R,3S)-3-isopropylmalate = (2S)-2-isopropylmalate. It functions in the pathway amino-acid biosynthesis; L-leucine biosynthesis; L-leucine from 3-methyl-2-oxobutanoate: step 2/4. Its function is as follows. Catalyzes the isomerization between 2-isopropylmalate and 3-isopropylmalate, via the formation of 2-isopropylmaleate. The chain is 3-isopropylmalate dehydratase large subunit from Enterobacter sp. (strain 638).